Reading from the N-terminus, the 261-residue chain is Small ribosomal subunit protein eS4B (261 aa).

Position 32 is a phosphoserine (serine 32). An S4 RNA-binding domain is found at 42–105 (LPLIVFLRNR…NENFRLVYDV (64 aa)). Lysine 62 is covalently cross-linked (Glycyl lysine isopeptide (Lys-Gly) (interchain with G-Cter in ubiquitin)). A Phosphothreonine modification is found at threonine 115. Residues lysine 134, lysine 161, lysine 168, lysine 174, lysine 179, lysine 211, and lysine 233 each participate in a glycyl lysine isopeptide (Lys-Gly) (interchain with G-Cter in ubiquitin) cross-link. Serine 247 bears the Phosphoserine mark.

It belongs to the eukaryotic ribosomal protein eS4 family. As to quaternary structure, component of the small ribosomal subunit (SSU). Mature yeast ribosomes consist of a small (40S) and a large (60S) subunit. The 40S small subunit contains 1 molecule of ribosomal RNA (18S rRNA) and 33 different proteins (encoded by 57 genes). The large 60S subunit contains 3 rRNA molecules (25S, 5.8S and 5S rRNA) and 46 different proteins (encoded by 81 genes).

Its subcellular location is the cytoplasm. In terms of biological role, component of the ribosome, a large ribonucleoprotein complex responsible for the synthesis of proteins in the cell. The small ribosomal subunit (SSU) binds messenger RNAs (mRNAs) and translates the encoded message by selecting cognate aminoacyl-transfer RNA (tRNA) molecules. The large subunit (LSU) contains the ribosomal catalytic site termed the peptidyl transferase center (PTC), which catalyzes the formation of peptide bonds, thereby polymerizing the amino acids delivered by tRNAs into a polypeptide chain. The nascent polypeptides leave the ribosome through a tunnel in the LSU and interact with protein factors that function in enzymatic processing, targeting, and the membrane insertion of nascent chains at the exit of the ribosomal tunnel. In Saccharomyces cerevisiae (strain ATCC 204508 / S288c) (Baker's yeast), this protein is Small ribosomal subunit protein eS4B.